The following is a 231-amino-acid chain: uncharacterized protein (231 aa).

The helical transmembrane segment at 10–30 (SQNIFFIAIVIFILSSVILYH) threads the bilayer.

It localises to the membrane. This is an uncharacterized protein from Rickettsia prowazekii (strain Madrid E).